Reading from the N-terminus, the 369-residue chain is NAD-dependent epimerase/dehydratase FUM13 (369 aa).

Y176 contributes to the NADP(+) binding site.

Belongs to the NAD(P)-dependent epimerase/dehydratase family. Dihydroflavonol-4-reductase subfamily.

It functions in the pathway mycotoxin biosynthesis. Functionally, NAD-dependent epimerase/dehydratase; part of the gene cluster that mediates the biosynthesis of fumonisins B1 (FB1), B2 (FB2), B3 (FB3), and B4 (FB4), which are carcinogenic mycotoxins. Within the pathway, FUM13 stereospecifically reduces the intermediate 3-keto intermediate 2-amino-3-oxo-12,16-dimethylicosane to the 3-hydroxyl product 2-amino-3-hydroxy-12,16-dimethylicosane. The biosynthesis starts with the FUM1-catalyzed carbon chain assembly from one molecule of acetyl-CoA, eight molecules of malonyl-CoA, and two molecules of methionine (in S-adenosyl form). The C18 polyketide chain is released from the enzyme by a nucleophilic attack of a carbanion, which is derived from R-carbon of alanine by decarboxylation, on the carbonyl carbon of polyketide acyl chain. This step is catalyzed by the pyridoxal 5'-phosphate-dependent aminoacyl transferase FUM8. The resultant 3-keto intermediate is then stereospecifically reduced to a 3-hydroxyl product by reductase FUM13. Subsequent oxidations at C-10 by the cytochrome P450 monooxygenase FUM2, C-14 and C-15 by FUM6, FUM12 or FUM15, tricarballylic esterification of the hydroxyl groups on C-14 and C-15 by acyltransferase FUM14, and C-5 hydroxylation by 2-keto-glutarate-dependent dioxygenase FUM3 furnish the biosynthesis of fumonisins. The tricarballylic moieties are most likely derived from the citric acid cycle, and their addition to the carbon backbone may involve FUM7, FUM10, FUM11 and FUM14. This Gibberella moniliformis (strain M3125 / FGSC 7600) (Maize ear and stalk rot fungus) protein is NAD-dependent epimerase/dehydratase FUM13.